A 313-amino-acid polypeptide reads, in one-letter code: Porphobilinogen deaminase (313 aa).

The residue at position 242 (cysteine 242) is an S-(dipyrrolylmethanemethyl)cysteine.

Belongs to the HMBS family. As to quaternary structure, monomer. The cofactor is dipyrromethane.

It catalyses the reaction 4 porphobilinogen + H2O = hydroxymethylbilane + 4 NH4(+). It participates in porphyrin-containing compound metabolism; protoporphyrin-IX biosynthesis; coproporphyrinogen-III from 5-aminolevulinate: step 2/4. Its function is as follows. Tetrapolymerization of the monopyrrole PBG into the hydroxymethylbilane pre-uroporphyrinogen in several discrete steps. This is Porphobilinogen deaminase from Enterobacter sp. (strain 638).